The following is a 179-amino-acid chain: Stathmin-2 (179 aa).

The segment at 1–26 (MAKTAMAYKEKMKELSMLSLICSCFY) is membrane attachment. Ser16 carries the post-translational modification Phosphoserine. Residues Cys22 and Cys24 are each lipidated (S-palmitoyl cysteine). The SLD domain occupies 38–179 (DDMEVKQINK…NKELQVELSG (142 aa)). Residues 39–96 (DMEVKQINKRASGQAFELILKPPSPISEAPRTLASPKKKDLSLEEIQKKLEAAEGRRK) form a regulatory/phosphorylation domain region. Ser50 bears the Phosphoserine mark. Phosphoserine; by MAPK8 is present on residues Ser62 and Ser73. Residues 75 to 179 (KKKDLSLEEI…NKELQVELSG (105 aa)) are a coiled coil. Phosphoserine occurs at positions 80 and 97.

Belongs to the stathmin family. As to quaternary structure, interacts with ITM2C. Interacts with MAPK8. Interacts with KIFBP. Interacts (via the N-terminal region) with CIB1 (via C-terminal region); the interaction is direct, occurs in a calcium-dependent manner and attenuates the neurite outgrowth inhibition of STMN2. Post-translationally, sumoylated. Phosphorylated by MAPK9 and MAPK10 in the developing brain cortex. Phosphorylated mostly by MAPK8. In terms of processing, N-terminal palmitoylation promotes specific anchoring to the cytosolic leaflet of Golgi membranes and subsequent vesicular trafficking along dendrites and axons. Neuronal Stathmins are substrates for palmitoyltransferases ZDHHC3, ZDHHC7 and ZDHHC15. In terms of tissue distribution, expressed in neurons (at protein level). Present in growth cones and abundant in developing neurons.

Its subcellular location is the cytoplasm. It is found in the perinuclear region. The protein resides in the cell projection. The protein localises to the growth cone. It localises to the axon. Its subcellular location is the membrane. It is found in the golgi apparatus. The protein resides in the endosome. The protein localises to the lamellipodium. In terms of biological role, regulator of microtubule stability. When phosphorylated by MAPK8, stabilizes microtubules and consequently controls neurite length in cortical neurons. In the developing brain, negatively regulates the rate of exit from multipolar stage and retards radial migration from the ventricular zone. This is Stathmin-2 (Stmn2) from Rattus norvegicus (Rat).